A 90-amino-acid polypeptide reads, in one-letter code: WAP four-disulfide core domain protein 12 (90 aa).

The signal sequence occupies residues 1–23 (MGSSSFLVLMVSLALVTLVAVEG). The WAP domain occupies 27-74 (GIEKAGVCPADNVRCFKSDPPQCHTDQDCLGERKCCYLHCGFKCVIPV). Intrachain disulfides connect Cys-34-Cys-62, Cys-41-Cys-66, Cys-49-Cys-61, and Cys-55-Cys-70.

It is found in the secreted. In terms of biological role, antibacterial protein. Putative acid-stable proteinase inhibitor. The sequence is that of WAP four-disulfide core domain protein 12 (WFDC12) from Gorilla gorilla gorilla (Western lowland gorilla).